We begin with the raw amino-acid sequence, 1134 residues long: DNA polymerase II large subunit (1134 aa).

This sequence belongs to the archaeal DNA polymerase II family. In terms of assembly, heterodimer of a large subunit and a small subunit.

It carries out the reaction DNA(n) + a 2'-deoxyribonucleoside 5'-triphosphate = DNA(n+1) + diphosphate. It catalyses the reaction Exonucleolytic cleavage in the 3'- to 5'-direction to yield nucleoside 5'-phosphates.. Its function is as follows. Possesses two activities: a DNA synthesis (polymerase) and an exonucleolytic activity that degrades single-stranded DNA in the 3'- to 5'-direction. Has a template-primer preference which is characteristic of a replicative DNA polymerase. The chain is DNA polymerase II large subunit from Methanocella arvoryzae (strain DSM 22066 / NBRC 105507 / MRE50).